The chain runs to 236 residues: 6-carboxyhexanoate--CoA ligase (236 aa).

Belongs to the BioW family. In terms of assembly, homodimer. Mg(2+) is required as a cofactor.

It catalyses the reaction heptanedioate + ATP + CoA = 6-carboxyhexanoyl-CoA + AMP + diphosphate. It participates in metabolic intermediate metabolism; pimeloyl-CoA biosynthesis; pimeloyl-CoA from pimelate: step 1/1. Its function is as follows. Catalyzes the transformation of pimelate into pimeloyl-CoA with concomitant hydrolysis of ATP to AMP. The sequence is that of 6-carboxyhexanoate--CoA ligase from Methanococcus aeolicus (strain ATCC BAA-1280 / DSM 17508 / OCM 812 / Nankai-3).